The chain runs to 87 residues: Omega-lycotoxin-Am1d (87 aa).

Residues 1–17 form the signal peptide; sequence MKLSIFFVLFFIAIAYC. Positions 18 to 40 are excised as a propeptide; that stretch reads QPEFLDDEEDEVEETLPVAEEGR. Disulfide bonds link cysteine 44–cysteine 59, cysteine 51–cysteine 64, cysteine 58–cysteine 84, and cysteine 66–cysteine 82.

The protein belongs to the neurotoxin omega-lctx family. In terms of tissue distribution, expressed by the venom gland.

It localises to the secreted. In terms of biological role, modulates Cav2.1/CACNA1A voltage-gated calcium channels (P/Q-type currents) in rat cerebellar Purkinje cells and hippocampal CA1-CA3 neurons. At saturating concentrations (&gt;10 nM) decelerates activation kinetics and slightly increases peak amplitude without affecting deactivation kinetics. In vivo, does not cause death when intravenously injected into mice. In rat models, through its activity on Cav2.1/CACNA1A, has an ameliorative effect on memory defects provoked by hyperstimulation of N-methyl-D-aspartate receptors (NMDARs) in the hippocampus. The polypeptide is Omega-lycotoxin-Am1d (Alopecosa marikovskyi (Wolf spider)).